Consider the following 331-residue polypeptide: Probable tRNA pseudouridine synthase B (331 aa).

The active-site Nucleophile is the D66. The PUA domain occupies 233–307; that stretch reads INKIIVKDSA…NEEDNREKYK (75 aa).

The protein belongs to the pseudouridine synthase TruB family. Type 2 subfamily.

It catalyses the reaction uridine(55) in tRNA = pseudouridine(55) in tRNA. Functionally, could be responsible for synthesis of pseudouridine from uracil-55 in the psi GC loop of transfer RNAs. This is Probable tRNA pseudouridine synthase B from Methanococcus aeolicus (strain ATCC BAA-1280 / DSM 17508 / OCM 812 / Nankai-3).